Reading from the N-terminus, the 328-residue chain is GTPase Obg (328 aa).

The Obg domain maps to 1–159 (MNFIDEVKIY…MWVQLSLKLL (159 aa)). Residues 160-327 (SDVGLVGLPN…IIKLALQTIK (168 aa)) form the OBG-type G domain. GTP is bound by residues 166 to 173 (GLPNAGKS), 191 to 195 (FTTLV), 212 to 215 (DIPG), 279 to 282 (NKID), and 308 to 310 (STY). Ser173 and Thr193 together coordinate Mg(2+).

This sequence belongs to the TRAFAC class OBG-HflX-like GTPase superfamily. OBG GTPase family. Monomer. It depends on Mg(2+) as a cofactor.

Its subcellular location is the cytoplasm. Its function is as follows. An essential GTPase which binds GTP, GDP and possibly (p)ppGpp with moderate affinity, with high nucleotide exchange rates and a fairly low GTP hydrolysis rate. Plays a role in control of the cell cycle, stress response, ribosome biogenesis and in those bacteria that undergo differentiation, in morphogenesis control. This is GTPase Obg from Rickettsia bellii (strain RML369-C).